The primary structure comprises 77 residues: Acyl carrier protein (77 aa).

Positions Ala-2 to Leu-77 constitute a Carrier domain. Ser-37 is subject to O-(pantetheine 4'-phosphoryl)serine.

It belongs to the acyl carrier protein (ACP) family. Post-translationally, 4'-phosphopantetheine is transferred from CoA to a specific serine of apo-ACP by AcpS. This modification is essential for activity because fatty acids are bound in thioester linkage to the sulfhydryl of the prosthetic group.

It is found in the cytoplasm. Its pathway is lipid metabolism; fatty acid biosynthesis. Carrier of the growing fatty acid chain in fatty acid biosynthesis. The protein is Acyl carrier protein of Geobacillus kaustophilus (strain HTA426).